A 93-amino-acid chain; its full sequence is uncharacterized protein (93 aa).

This is an uncharacterized protein from Pasteurella multocida (strain Pm70).